Consider the following 248-residue polypeptide: Tyrosine recombinase XerD-like (248 aa).

The Core-binding (CB) domain maps to 1 to 72 (MKSYIEPFIA…TANQFLYYLY (72 aa)). The region spanning 85–248 (DTMKVMRTEK…PVTLEKYYKS (164 aa)) is the Tyr recombinase domain. Catalysis depends on residues lysine 149 and arginine 213. The active-site O-(3'-phospho-DNA)-tyrosine intermediate is tyrosine 245.

The protein belongs to the 'phage' integrase family. XerD-like subfamily.

It is found in the cytoplasm. Its function is as follows. Putative tyrosine recombinase. Not involved in the cutting and rejoining of the recombining DNA molecules on dif(SL) site. The protein is Tyrosine recombinase XerD-like of Streptococcus pyogenes serotype M28 (strain MGAS6180).